A 219-amino-acid polypeptide reads, in one-letter code: Large ribosomal subunit protein uL3 (219 aa).

Residues 133 to 145 show a composition bias toward polar residues; the sequence is GRASHGNSRSHNV. The interval 133–153 is disordered; the sequence is GRASHGNSRSHNVPGSIGMAQ. Glutamine 153 is modified (N5-methylglutamine).

Belongs to the universal ribosomal protein uL3 family. Part of the 50S ribosomal subunit. Forms a cluster with proteins L14 and L19. In terms of processing, methylated by PrmB.

Its function is as follows. One of the primary rRNA binding proteins, it binds directly near the 3'-end of the 23S rRNA, where it nucleates assembly of the 50S subunit. This Paraburkholderia phymatum (strain DSM 17167 / CIP 108236 / LMG 21445 / STM815) (Burkholderia phymatum) protein is Large ribosomal subunit protein uL3.